The chain runs to 220 residues: 7-cyano-7-deazaguanine synthase (220 aa).

ATP is bound at residue 10–20; that stretch reads FSGGQDSTTCL. The Zn(2+) site is built by cysteine 186, cysteine 195, cysteine 198, and cysteine 201.

The protein belongs to the QueC family. Homodimer. Zn(2+) is required as a cofactor.

The enzyme catalyses 7-carboxy-7-deazaguanine + NH4(+) + ATP = 7-cyano-7-deazaguanine + ADP + phosphate + H2O + H(+). The protein operates within purine metabolism; 7-cyano-7-deazaguanine biosynthesis. Catalyzes the ATP-dependent conversion of 7-carboxy-7-deazaguanine (CDG) to 7-cyano-7-deazaguanine (preQ(0)). This chain is 7-cyano-7-deazaguanine synthase, found in Bacillus cereus (strain G9842).